Consider the following 407-residue polypeptide: Histone-lysine N-methyltransferase SUV39H2 (407 aa).

The Chromo domain maps to 43–101; sequence YEVEYLCDYKVEEGKEYYLVKWKGWPESSNTWEPQKNLKCPKLLENFLSDKDEYLSRMK. The Pre-SET domain maps to 185-243; that stretch reads TGCECSDCPAEKCCPKEAGFILAYNKQKKLKIQPGLPIYECNSFCRCGPDCPNRIVQKG. The Zn(2+) site is built by cysteine 187, cysteine 189, cysteine 192, cysteine 197, cysteine 198, cysteine 225, cysteine 229, cysteine 231, and cysteine 235. In terms of domain architecture, SET spans 246 to 369; that stretch reads YSLCIFRTNN…AGEELTFDYQ (124 aa). S-adenosyl-L-methionine-binding positions include 257 to 259, tyrosine 300, and 326 to 327; these read RGW and NH. Zn(2+) contacts are provided by cysteine 329, cysteine 395, cysteine 397, and cysteine 402. The 17-residue stretch at 391–407 folds into the Post-SET domain; it reads IRTVCKCGAVCCRGYLN.

Belongs to the class V-like SAM-binding methyltransferase superfamily. Histone-lysine methyltransferase family. Suvar3-9 subfamily.

It localises to the nucleus. The protein resides in the chromosome. It is found in the centromere. It catalyses the reaction L-lysyl(9)-[histone H3] + 3 S-adenosyl-L-methionine = N(6),N(6),N(6)-trimethyl-L-lysyl(9)-[histone H3] + 3 S-adenosyl-L-homocysteine + 3 H(+). Functionally, histone methyltransferase that specifically trimethylates 'Lys-9' of histone H3 using monomethylated H3 'Lys-9' as substrate. H3 'Lys-9' trimethylation represents a specific tag for epigenetic transcriptional repression by recruiting HP1 (CBX1, CBX3 and/or CBX5) proteins to methylated histones. Mainly functions in heterochromatin regions, thereby playing a central role in the establishment of constitutive heterochromatin at pericentric and telomere regions. H3 'Lys-9' trimethylation is also required to direct DNA methylation at pericentric repeats. SUV39H1 is targeted to histone H3 via its interaction with RB1 and is involved in many processes. The chain is Histone-lysine N-methyltransferase SUV39H2 (SUV39H2) from Gallus gallus (Chicken).